A 257-amino-acid chain; its full sequence is tRNA (guanine-N(7)-)-methyltransferase (257 aa).

Residues 1 to 58 are disordered; sequence MQPIEQPGTGPDDITPESQDTNTAESAESGAETGHPRRIRSFVRRAGRTSTGQQRAIN. The span at 16-26 shows a compositional bias: polar residues; it reads PESQDTNTAES. The segment covering 36–47 has biased composition (basic residues); sequence PRRIRSFVRRAG. Residues glutamate 89, glutamate 114, aspartate 141, and aspartate 164 each contribute to the S-adenosyl-L-methionine site. Residue aspartate 164 is part of the active site. Lysine 168 contributes to the substrate binding site. The tract at residues 170-175 is interaction with RNA; the sequence is RHNKRR. Substrate contacts are provided by residues aspartate 200 and 235-238; that span reads TKFE.

It belongs to the class I-like SAM-binding methyltransferase superfamily. TrmB family.

The enzyme catalyses guanosine(46) in tRNA + S-adenosyl-L-methionine = N(7)-methylguanosine(46) in tRNA + S-adenosyl-L-homocysteine. It participates in tRNA modification; N(7)-methylguanine-tRNA biosynthesis. Catalyzes the formation of N(7)-methylguanine at position 46 (m7G46) in tRNA. The chain is tRNA (guanine-N(7)-)-methyltransferase from Ralstonia pickettii (strain 12J).